A 176-amino-acid chain; its full sequence is Disulfide bond formation protein B (176 aa).

Over 1 to 14 the chain is Cytoplasmic; sequence MLQFLNRCSKGRGA. Residues 15 to 31 form a helical membrane-spanning segment; the sequence is WLLMALTALVLELVALY. The Periplasmic segment spans residues 32–49; the sequence is FQHVMLLQPCVMCIYERA. The cysteines at positions 41 and 44 are disulfide-linked. Residues 50–65 traverse the membrane as a helical segment; the sequence is ALFGILGASLLGAIAP. Over 66-71 the chain is Cytoplasmic; that stretch reads KSPLRY. The chain crosses the membrane as a helical span at residues 72-89; the sequence is LAIFIWIYSAWKGVQLAW. The Periplasmic segment spans residues 90 to 144; sequence THTMLQLHPSPFTTCDFFVSFPSWLPLDKWFPAVFVASGDCAVKQWEFLSLEMPQ. Cysteine 104 and cysteine 130 are oxidised to a cystine. Residues 145–163 form a helical membrane-spanning segment; sequence WLVGIFAAYLFIAILVLIS. The Cytoplasmic portion of the chain corresponds to 164-176; sequence QFVKPKRRDLFSR.

This sequence belongs to the DsbB family.

The protein localises to the cell inner membrane. In terms of biological role, required for disulfide bond formation in some periplasmic proteins. Acts by oxidizing the DsbA protein. In Yersinia enterocolitica serotype O:8 / biotype 1B (strain NCTC 13174 / 8081), this protein is Disulfide bond formation protein B.